We begin with the raw amino-acid sequence, 363 residues long: MQSTVVPPGGLVLITGVNGFLASHLALQLIQRGYMVKGTVRTAESASWITEAIMRRHPTGKFQAVVIPILSASGVMDDLVKDVDGIAYVAADTSLNPDPDQVITPGLEALKVALQSATQTQSVKRFVLTSSYTAAVDTFVPSAPDALITRDSWNQTSTPRAWAPPPYDALRALDVYQSLKTESETLFWKFASEAKPSFIQNSVLPGFVVGPIIHRKQRGSTAALVKAYFDDVTCNQAFAWISAPWVVDVVDNALLHLAGLIDEDVQNERLLALAEPFKLGNFARVFEQIDPSRSWPAGDNKHGVKDEGGTKWVADTKRSVAILQRLGQDEGFTPFLESVRRTCLDSDPAWTFGNFLPKSDSQE.

A helical membrane pass occupies residues G10 to I30. Y176 contributes to the NADP(+) binding site.

It belongs to the NAD(P)-dependent epimerase/dehydratase family. Dihydroflavonol-4-reductase subfamily.

The protein localises to the membrane. The protein operates within secondary metabolite biosynthesis; terpenoid biosynthesis. Functionally, NAD-dependent epimerase/dehydratase; part of the gene cluster that mediates the biosynthesis of talaronoid C, a fusicoccane diterpenoid with an unprecedented tricyclic 5/8/6 ring system. The first step in the pathway is performed by the fusicoccadiene synthase tndC that possesses both prenyl transferase and terpene cyclase activity, converting isopentenyl diphosphate and dimethylallyl diphosphate into geranylgeranyl diphosphate (GGDP) and further converting GGDP into talarodiene, a precursor for talaronoid C. The remaining enzymes from the cluster include the cytochrome P450 monooxygenase tndB, the aldehyde reductase tndE and the alcohol dehydrogenase tndF that are involved in the conversion of talarodiene into talaronoid C. This is NAD-dependent epimerase/dehydratase tndE from Aspergillus flavipes.